The primary structure comprises 356 residues: MSIDSALNWDGEMTVTRFDRETGAHFVIRLDSTQLGPAAGGTRAAQYSQLADALTDAGKLAGAMTLKMAVSNLPMGGGKSVIALPAPRHSIDPSTWARILRIHAENIDKLSGNYWTGPDVNTNSADMDTLNDTTEFVFGRSLERGGAGSSAFTTAVGVFEAMKATVAHRGLGSLDGLTVLVQGLGAVGGSLASLAAEAGAQLLVADTDTERVAHAVALGHTAVALEDVLSTPCDVFAPCAMGGVITTEVARTLDCSVVAGAANNVIADEAASDILHARGILYAPDFVANAGGAIHLVGREVLGWSESVVHERAVAIGDTLNQVFEISDNDGVTPDEAARTLAGRRAREASTTTATA.

R43 provides a ligand contact to NAD(+). K67 provides a ligand contact to L-phenylalanine. K79 functions as the Proton donor/acceptor in the catalytic mechanism. 118-119 (PD) contacts L-phenylalanine. Residues D119, S150, T154, 183–189 (GLGAVGG), 206–207 (DT), R211, 240–241 (AM), and 261–263 (AAN) each bind NAD(+). N263 contacts L-phenylalanine.

The protein belongs to the Glu/Leu/Phe/Val dehydrogenases family. As to quaternary structure, homotetramer, dimer of dimers.

The enzyme catalyses L-phenylalanine + NAD(+) + H2O = 3-phenylpyruvate + NH4(+) + NADH + H(+). It functions in the pathway amino-acid biosynthesis; L-phenylalanine biosynthesis; L-phenylalanine from phenylpyruvate (PDH route): step 1/1. Its activity is regulated as follows. Subject to competitive inhibition by 3-phenylpropionate for the conversion of L-phenylalanine to phenylpyruvate. Subject to competitive inhibition by D-phenylalanine for the conversion of phenylpyruvate to L-phenylalanine. Catalyzes the reversible NAD(+)-dependent oxidative deamination of L-phenylalanine to phenylpyruvate. In Rhodococcus sp, this protein is Phenylalanine dehydrogenase.